Reading from the N-terminus, the 131-residue chain is Superoxide dismutase [Ni] (131 aa).

Positions 1–14 are excised as a propeptide; sequence MLSRLFAPKVKVSA. 3 residues coordinate Ni(2+): His-15, Cys-16, and Cys-20.

It belongs to the nickel superoxide dismutase family. In terms of assembly, homohexamer. The hexameric protein has roughly the shape of a hollow sphere with an outer diameter of 72 Angstroms and a large inner cavity. Requires Ni(2+) as cofactor.

It is found in the cytoplasm. The catalysed reaction is 2 superoxide + 2 H(+) = H2O2 + O2. The sequence is that of Superoxide dismutase [Ni] (sodN) from Streptomyces seoulensis.